The primary structure comprises 567 residues: Synaptotagmin-like protein 1 (567 aa).

In terms of domain architecture, RabBD spans 31–87 (LLDLSFLTEEEQEAISDVLKRDAHLRQLEEGRVSKLRASLEDPWQLKILTGDWFQEA). The interval 103 to 255 (RASIRRKKSP…VSSLNSSTLS (153 aa)) is disordered. The residue at position 120 (serine 120) is a Phosphoserine. 2 stretches are compositionally biased toward acidic residues: residues 122-135 (GEAE…IEGE) and 170-184 (GQEE…ELEA). Residues 208-219 (ESQPTPAQSKAT) show a composition bias toward polar residues. At serine 220 the chain carries Phosphoserine. Residues 235 to 255 (SLDRMLSSSSSVSSLNSSTLS) show a composition bias toward low complexity. C2 domains lie at 271 to 390 (VRGS…WLPL) and 403 to 532 (SRGL…VPWM).

Monomer. Binds NCF2 and NRXN1. Binds RAB27A that has been activated by GTP-binding via its N-terminus. As to expression, highly expressed in lung. Detected at lower levels in spleen, liver and kidney, and at very low levels in heart, brain and skeletal muscle. Expressed in cytotoxic T-lymphocytes (CTL).

It is found in the endomembrane system. Its subcellular location is the cell membrane. In terms of biological role, binds phosphatidylinositol 3,4,5-trisphosphate. May play a role in vesicle trafficking. Acts as a RAB27A effector protein and may play a role in cytotoxic granule exocytosis in lymphocytes. The polypeptide is Synaptotagmin-like protein 1 (Sytl1) (Mus musculus (Mouse)).